The sequence spans 362 residues: MIDPFKRLARKGLFLFDPETAHGMSIAALKSGLVPACQLTPDPRLRQTVAGLTFENPLGMAAGYDKNAEVPEALLKLGFGFTEIGTVTPKPQSGNPRPRIFRLVEDEGVINRLGFNNEGHDAAFGRLAALRGGGMIGVNIGANKDSEDRIADYVAGIRRFYSVARYFTANISSPNTPGLRDLQGRESLAVLLSAVLAARDEMGAASGRKIPVFLKIAPDLTEEGMDDIAAEALSHALDGLIVSNTTLSRDGLKDQRQAKETGGLSGVPLFEKSTAVLARMRKRVGPDLPIIGVGGVSSAETALEKIRAGADLVQLYSCMVYEGPGLAGDVVRGLSKLLDREKAASIRELRDTRVDYWAARKV.

FMN contacts are provided by residues 62–66 (AGYDK) and T86. K66 contributes to the substrate binding site. A substrate-binding site is contributed by 111–115 (NRLGF). Positions 139 and 170 each coordinate FMN. N170 contributes to the substrate binding site. S173 serves as the catalytic Nucleophile. Residue N175 coordinates substrate. The FMN site is built by K215 and S243. 244–245 (NT) serves as a coordination point for substrate. FMN is bound by residues G266, G295, and 316–317 (YS).

This sequence belongs to the dihydroorotate dehydrogenase family. Type 2 subfamily. Monomer. FMN is required as a cofactor.

The protein localises to the cell membrane. The catalysed reaction is (S)-dihydroorotate + a quinone = orotate + a quinol. Its pathway is pyrimidine metabolism; UMP biosynthesis via de novo pathway; orotate from (S)-dihydroorotate (quinone route): step 1/1. Catalyzes the conversion of dihydroorotate to orotate with quinone as electron acceptor. The protein is Dihydroorotate dehydrogenase (quinone) of Rhizobium johnstonii (strain DSM 114642 / LMG 32736 / 3841) (Rhizobium leguminosarum bv. viciae).